Reading from the N-terminus, the 612-residue chain is Glutamine--fructose-6-phosphate aminotransferase [isomerizing] (612 aa).

Catalysis depends on cysteine 2, which acts as the Nucleophile; for GATase activity. The Glutamine amidotransferase type-2 domain maps to 2 to 217; sequence CGIVGGVAER…EGDIARLTRD (216 aa). 2 SIS domains span residues 283-428 and 461-602; these read AEAD…VKEQ and LSEL…VDQP. The active-site For Fru-6P isomerization activity is lysine 607.

Homodimer.

It localises to the cytoplasm. It catalyses the reaction D-fructose 6-phosphate + L-glutamine = D-glucosamine 6-phosphate + L-glutamate. Its function is as follows. Catalyzes the first step in hexosamine metabolism, converting fructose-6P into glucosamine-6P using glutamine as a nitrogen source. The polypeptide is Glutamine--fructose-6-phosphate aminotransferase [isomerizing] (Acinetobacter baylyi (strain ATCC 33305 / BD413 / ADP1)).